The chain runs to 505 residues: Aspartyl/glutamyl-tRNA(Asn/Gln) amidotransferase subunit B (505 aa).

It belongs to the GatB/GatE family. GatB subfamily. Heterotrimer of A, B and C subunits.

It catalyses the reaction L-glutamyl-tRNA(Gln) + L-glutamine + ATP + H2O = L-glutaminyl-tRNA(Gln) + L-glutamate + ADP + phosphate + H(+). It carries out the reaction L-aspartyl-tRNA(Asn) + L-glutamine + ATP + H2O = L-asparaginyl-tRNA(Asn) + L-glutamate + ADP + phosphate + 2 H(+). Its function is as follows. Allows the formation of correctly charged Asn-tRNA(Asn) or Gln-tRNA(Gln) through the transamidation of misacylated Asp-tRNA(Asn) or Glu-tRNA(Gln) in organisms which lack either or both of asparaginyl-tRNA or glutaminyl-tRNA synthetases. The reaction takes place in the presence of glutamine and ATP through an activated phospho-Asp-tRNA(Asn) or phospho-Glu-tRNA(Gln). This chain is Aspartyl/glutamyl-tRNA(Asn/Gln) amidotransferase subunit B, found in Haloarcula marismortui (strain ATCC 43049 / DSM 3752 / JCM 8966 / VKM B-1809) (Halobacterium marismortui).